The sequence spans 377 residues: Ribosomal RNA large subunit methyltransferase G (377 aa).

This sequence belongs to the methyltransferase superfamily. RlmG family.

It localises to the cytoplasm. The enzyme catalyses guanosine(1835) in 23S rRNA + S-adenosyl-L-methionine = N(2)-methylguanosine(1835) in 23S rRNA + S-adenosyl-L-homocysteine + H(+). Its function is as follows. Specifically methylates the guanine in position 1835 (m2G1835) of 23S rRNA. This chain is Ribosomal RNA large subunit methyltransferase G, found in Shewanella sp. (strain MR-4).